The primary structure comprises 469 residues: Glutamine synthetase (469 aa).

One can recognise a GS beta-grasp domain in the interval 15 to 96 (EDVKFVDVRF…INFFIHDPIT (82 aa)). Residues 104-469 (PRNVAKKAEA…PHEFEMYFDV (366 aa)) form the GS catalytic domain. Positions 129 and 131 each coordinate Mg(2+). Glu205 lines the ATP pocket. Glu210 and Glu218 together coordinate Mg(2+). 221-223 (YKF) contributes to the ATP binding site. L-glutamate is bound by residues 262-263 (NG) and Gly263. His267 is a Mg(2+) binding site. Residues 269 to 271 (HQS) and Ser271 each bind ATP. Residues Arg320, Glu326, and Arg338 each contribute to the L-glutamate site. Residues Arg338, Arg343, and Lys352 each contribute to the ATP site. Glu357 provides a ligand contact to Mg(2+). L-glutamate is bound at residue Arg359. Tyr397 carries the O-AMP-tyrosine modification.

This sequence belongs to the glutamine synthetase family. In terms of assembly, oligomer of 12 subunits arranged in the form of two hexagons. Mg(2+) serves as cofactor.

It is found in the cytoplasm. The enzyme catalyses L-glutamate + NH4(+) + ATP = L-glutamine + ADP + phosphate + H(+). Its activity is regulated as follows. The activity of this enzyme could be controlled by adenylation under conditions of abundant glutamine. In terms of biological role, catalyzes the ATP-dependent biosynthesis of glutamine from glutamate and ammonia. Complements L-glutamine auxotrophy of an E.coli glnA mutant. This is Glutamine synthetase from Streptomyces coelicolor (strain ATCC BAA-471 / A3(2) / M145).